An 89-amino-acid chain; its full sequence is Barrier-to-autointegration factor 1 (89 aa).

It belongs to the BAF family. In terms of assembly, interacts with emr-1 and lem-2. Interacts with lem-4l, leading to decreased phosphorylation by VRK1 and promoting dephosphorylation by protein phosphatase 2A (PP2A). In terms of processing, phosphorylated by vrk-1. Phosphorylation by vrk-1 in mitosis is essential to achieve correct timing of recruitment of nuclear envelope components during nuclear envelope assembly. Dephosphorylated by protein phosphatase 2A (PP2A) following interaction with lem-4l during mitotic exit, leading to mitotic nuclear envelope reassembly.

It is found in the nucleus. In terms of biological role, DNA-binding protein which plays an essential role in nuclear envelope formation. Required for normal chromosome segregation during mitosis. Associates with the nuclear lamina via its interaction with LEM domain containing proteins emr-1 and lem-2. In association with lem-3, plays a role in radiation-induced DNA damage repair response. This chain is Barrier-to-autointegration factor 1 (baf-1), found in Caenorhabditis elegans.